A 171-amino-acid chain; its full sequence is Small ribosomal subunit protein mS25 (171 aa).

This sequence belongs to the mitochondrion-specific ribosomal protein mS25 family. Component of the mitochondrial ribosome small subunit (28S) which comprises a 12S rRNA and about 30 distinct proteins.

It localises to the mitochondrion. The sequence is that of Small ribosomal subunit protein mS25 (Mrps25) from Rattus norvegicus (Rat).